Reading from the N-terminus, the 150-residue chain is Large ribosomal subunit protein bL9 (150 aa).

Belongs to the bacterial ribosomal protein bL9 family.

Its function is as follows. Binds to the 23S rRNA. The protein is Large ribosomal subunit protein bL9 of Neisseria meningitidis serogroup B (strain ATCC BAA-335 / MC58).